The following is a 370-amino-acid chain: DNA replication and repair protein RecF (370 aa).

30 to 37 (GENAQGKT) provides a ligand contact to ATP.

The protein belongs to the RecF family.

Its subcellular location is the cytoplasm. Its function is as follows. The RecF protein is involved in DNA metabolism; it is required for DNA replication and normal SOS inducibility. RecF binds preferentially to single-stranded, linear DNA. It also seems to bind ATP. This is DNA replication and repair protein RecF from Listeria innocua serovar 6a (strain ATCC BAA-680 / CLIP 11262).